A 413-amino-acid chain; its full sequence is Serine hydroxymethyltransferase (413 aa).

Residues Leu-117 and Gly-121 to Leu-123 each bind (6S)-5,6,7,8-tetrahydrofolate. Lys-226 bears the N6-(pyridoxal phosphate)lysine mark. Residue Ser-349–Phe-351 participates in (6S)-5,6,7,8-tetrahydrofolate binding.

It belongs to the SHMT family. As to quaternary structure, homodimer. Pyridoxal 5'-phosphate is required as a cofactor.

Its subcellular location is the cytoplasm. It catalyses the reaction (6R)-5,10-methylene-5,6,7,8-tetrahydrofolate + glycine + H2O = (6S)-5,6,7,8-tetrahydrofolate + L-serine. Its pathway is one-carbon metabolism; tetrahydrofolate interconversion. It participates in amino-acid biosynthesis; glycine biosynthesis; glycine from L-serine: step 1/1. Its function is as follows. Catalyzes the reversible interconversion of serine and glycine with tetrahydrofolate (THF) serving as the one-carbon carrier. This reaction serves as the major source of one-carbon groups required for the biosynthesis of purines, thymidylate, methionine, and other important biomolecules. Also exhibits THF-independent aldolase activity toward beta-hydroxyamino acids, producing glycine and aldehydes, via a retro-aldol mechanism. The protein is Serine hydroxymethyltransferase of Listeria welshimeri serovar 6b (strain ATCC 35897 / DSM 20650 / CCUG 15529 / CIP 8149 / NCTC 11857 / SLCC 5334 / V8).